The chain runs to 342 residues: S-adenosylmethionine:tRNA ribosyltransferase-isomerase (342 aa).

This sequence belongs to the QueA family. As to quaternary structure, monomer.

The protein resides in the cytoplasm. It carries out the reaction 7-aminomethyl-7-carbaguanosine(34) in tRNA + S-adenosyl-L-methionine = epoxyqueuosine(34) in tRNA + adenine + L-methionine + 2 H(+). Its pathway is tRNA modification; tRNA-queuosine biosynthesis. Functionally, transfers and isomerizes the ribose moiety from AdoMet to the 7-aminomethyl group of 7-deazaguanine (preQ1-tRNA) to give epoxyqueuosine (oQ-tRNA). This chain is S-adenosylmethionine:tRNA ribosyltransferase-isomerase, found in Campylobacter jejuni subsp. jejuni serotype O:23/36 (strain 81-176).